The primary structure comprises 214 residues: Ribosomal RNA small subunit methyltransferase G (214 aa).

S-adenosyl-L-methionine contacts are provided by residues glycine 73, leucine 78, 124 to 125 (VE), and arginine 139.

This sequence belongs to the methyltransferase superfamily. RNA methyltransferase RsmG family.

The protein localises to the cytoplasm. It catalyses the reaction guanosine(527) in 16S rRNA + S-adenosyl-L-methionine = N(7)-methylguanosine(527) in 16S rRNA + S-adenosyl-L-homocysteine. Its function is as follows. Specifically methylates the N7 position of guanine in position 527 of 16S rRNA. The protein is Ribosomal RNA small subunit methyltransferase G of Aeromonas hydrophila subsp. hydrophila (strain ATCC 7966 / DSM 30187 / BCRC 13018 / CCUG 14551 / JCM 1027 / KCTC 2358 / NCIMB 9240 / NCTC 8049).